A 139-amino-acid polypeptide reads, in one-letter code: Large ribosomal subunit protein uL16 (139 aa).

Positions 1 to 17 (MLMPKRVKYRKSQRGRM) are enriched in basic residues. Residues 1 to 24 (MLMPKRVKYRKSQRGRMKGNSGRG) are disordered.

It belongs to the universal ribosomal protein uL16 family. Part of the 50S ribosomal subunit.

Functionally, binds 23S rRNA and is also seen to make contacts with the A and possibly P site tRNAs. This Chlorobium limicola (strain DSM 245 / NBRC 103803 / 6330) protein is Large ribosomal subunit protein uL16.